The primary structure comprises 215 residues: Adenylate kinase (215 aa).

ATP is bound at residue Gly-10–Thr-15. The tract at residues Ser-30–Val-59 is NMP. AMP-binding positions include Thr-31, Arg-36, Gly-57–Val-59, Gly-85–Arg-88, and Gln-92. An LID region spans residues Gly-122 to Asp-159. Residues Arg-123 and Ile-132–Tyr-133 contribute to the ATP site. The AMP site is built by Arg-156 and Arg-167. ATP is bound at residue Gly-201.

This sequence belongs to the adenylate kinase family. As to quaternary structure, monomer.

The protein resides in the cytoplasm. It carries out the reaction AMP + ATP = 2 ADP. It participates in purine metabolism; AMP biosynthesis via salvage pathway; AMP from ADP: step 1/1. Its function is as follows. Catalyzes the reversible transfer of the terminal phosphate group between ATP and AMP. Plays an important role in cellular energy homeostasis and in adenine nucleotide metabolism. This Pseudomonas savastanoi pv. phaseolicola (strain 1448A / Race 6) (Pseudomonas syringae pv. phaseolicola (strain 1448A / Race 6)) protein is Adenylate kinase.